A 274-amino-acid chain; its full sequence is ATP synthase subunit delta (274 aa).

It belongs to the ATPase delta chain family. In terms of assembly, F-type ATPases have 2 components, F(1) - the catalytic core - and F(0) - the membrane proton channel. F(1) has five subunits: alpha(3), beta(3), gamma(1), delta(1), epsilon(1). F(0) has three main subunits: a(1), b(2) and c(10-14). The alpha and beta chains form an alternating ring which encloses part of the gamma chain. F(1) is attached to F(0) by a central stalk formed by the gamma and epsilon chains, while a peripheral stalk is formed by the delta and b chains.

The protein resides in the cell membrane. In terms of biological role, f(1)F(0) ATP synthase produces ATP from ADP in the presence of a proton or sodium gradient. F-type ATPases consist of two structural domains, F(1) containing the extramembraneous catalytic core and F(0) containing the membrane proton channel, linked together by a central stalk and a peripheral stalk. During catalysis, ATP synthesis in the catalytic domain of F(1) is coupled via a rotary mechanism of the central stalk subunits to proton translocation. This protein is part of the stalk that links CF(0) to CF(1). It either transmits conformational changes from CF(0) to CF(1) or is implicated in proton conduction. This Acidothermus cellulolyticus (strain ATCC 43068 / DSM 8971 / 11B) protein is ATP synthase subunit delta.